A 301-amino-acid chain; its full sequence is Glycine--tRNA ligase alpha subunit (301 aa).

Belongs to the class-II aminoacyl-tRNA synthetase family. As to quaternary structure, tetramer of two alpha and two beta subunits.

The protein resides in the cytoplasm. The enzyme catalyses tRNA(Gly) + glycine + ATP = glycyl-tRNA(Gly) + AMP + diphosphate. The protein is Glycine--tRNA ligase alpha subunit of Polaromonas sp. (strain JS666 / ATCC BAA-500).